The chain runs to 193 residues: Oligoribonuclease (193 aa).

The Exonuclease domain occupies 14 to 177 (LIWIDLEMTG…SDIYDSIAEL (164 aa)). Residue Tyr-135 is part of the active site.

It belongs to the oligoribonuclease family.

It localises to the cytoplasm. Functionally, 3'-to-5' exoribonuclease specific for small oligoribonucleotides. In Xylella fastidiosa (strain Temecula1 / ATCC 700964), this protein is Oligoribonuclease.